A 445-amino-acid polypeptide reads, in one-letter code: tRNA-2-methylthio-N(6)-dimethylallyladenosine synthase (445 aa).

One can recognise an MTTase N-terminal domain in the interval 3–124 (KNLYIKTYGC…LPELISKIVR (122 aa)). Cysteine 12, cysteine 48, cysteine 87, cysteine 162, cysteine 166, and cysteine 169 together coordinate [4Fe-4S] cluster. The 233-residue stretch at 148–380 (YPQGASSFIS…QKELMDQQLA (233 aa)) folds into the Radical SAM core domain. The region spanning 383 to 445 (ESCVGSTIKV…SLNSLTGEIL (63 aa)) is the TRAM domain.

Belongs to the methylthiotransferase family. MiaB subfamily. In terms of assembly, monomer. [4Fe-4S] cluster serves as cofactor.

It is found in the cytoplasm. It carries out the reaction N(6)-dimethylallyladenosine(37) in tRNA + (sulfur carrier)-SH + AH2 + 2 S-adenosyl-L-methionine = 2-methylsulfanyl-N(6)-dimethylallyladenosine(37) in tRNA + (sulfur carrier)-H + 5'-deoxyadenosine + L-methionine + A + S-adenosyl-L-homocysteine + 2 H(+). In terms of biological role, catalyzes the methylthiolation of N6-(dimethylallyl)adenosine (i(6)A), leading to the formation of 2-methylthio-N6-(dimethylallyl)adenosine (ms(2)i(6)A) at position 37 in tRNAs that read codons beginning with uridine. This Rickettsia akari (strain Hartford) protein is tRNA-2-methylthio-N(6)-dimethylallyladenosine synthase.